Here is a 297-residue protein sequence, read N- to C-terminus: Glycosylphosphatidylinositol anchor biosynthesis protein 11 (297 aa).

The span at 1–18 (MTSASPSPLRAANAASSA) shows a compositional bias: low complexity. The tract at residues 1–26 (MTSASPSPLRAANAASSAPVPPPAMK) is disordered. Helical transmembrane passes span 44-64 (SFVH…ALVA) and 76-96 (FLAL…GSVL). Positions 97–140 (PSPPASPVSDGDEKEKEKEKEKEKEKEKRKLPLRAGKLPRKKNQ) are disordered. The span at 107 to 126 (GDEKEKEKEKEKEKEKEKRK) shows a compositional bias: basic and acidic residues. Over residues 127–140 (LPLRAGKLPRKKNQ) the composition is skewed to basic residues. Asn-139 carries an N-linked (GlcNAc...) asparagine glycan. A run of 4 helical transmembrane segments spans residues 157–177 (LILT…LFGA), 187–207 (VLCA…VHGV), 225–245 (VWGG…PIPL), and 253–273 (AFPI…SVVC).

This sequence belongs to the PIGF family.

The protein localises to the endoplasmic reticulum membrane. Its pathway is glycolipid biosynthesis; glycosylphosphatidylinositol-anchor biosynthesis. In terms of biological role, acts in the GPI biosynthetic pathway between GlcNAc-PI synthesis and GPI transfer to protein. In Aspergillus fumigatus (strain ATCC MYA-4609 / CBS 101355 / FGSC A1100 / Af293) (Neosartorya fumigata), this protein is Glycosylphosphatidylinositol anchor biosynthesis protein 11 (gpi11).